The chain runs to 291 residues: 33 kDa chaperonin (291 aa).

Cystine bridges form between Cys229-Cys231 and Cys262-Cys265.

Belongs to the HSP33 family. In terms of processing, under oxidizing conditions two disulfide bonds are formed involving the reactive cysteines. Under reducing conditions zinc is bound to the reactive cysteines and the protein is inactive.

It is found in the cytoplasm. Functionally, redox regulated molecular chaperone. Protects both thermally unfolding and oxidatively damaged proteins from irreversible aggregation. Plays an important role in the bacterial defense system toward oxidative stress. This chain is 33 kDa chaperonin, found in Vibrio cholerae serotype O1 (strain ATCC 39315 / El Tor Inaba N16961).